The following is a 268-amino-acid chain: Tryptophan synthase alpha chain (268 aa).

Active-site proton acceptor residues include Glu-49 and Asp-60.

It belongs to the TrpA family. In terms of assembly, tetramer of two alpha and two beta chains.

It carries out the reaction (1S,2R)-1-C-(indol-3-yl)glycerol 3-phosphate + L-serine = D-glyceraldehyde 3-phosphate + L-tryptophan + H2O. The protein operates within amino-acid biosynthesis; L-tryptophan biosynthesis; L-tryptophan from chorismate: step 5/5. The alpha subunit is responsible for the aldol cleavage of indoleglycerol phosphate to indole and glyceraldehyde 3-phosphate. In Vibrio vulnificus (strain CMCP6), this protein is Tryptophan synthase alpha chain.